Here is a 37-residue protein sequence, read N- to C-terminus: Large ribosomal subunit protein bL36c (37 aa).

Belongs to the bacterial ribosomal protein bL36 family.

The protein resides in the plastid. Its subcellular location is the chloroplast. This Psilotum nudum (Whisk fern) protein is Large ribosomal subunit protein bL36c.